The sequence spans 181 residues: ATP synthase subunit delta (181 aa).

The protein belongs to the ATPase delta chain family. In terms of assembly, F-type ATPases have 2 components, F(1) - the catalytic core - and F(0) - the membrane proton channel. F(1) has five subunits: alpha(3), beta(3), gamma(1), delta(1), epsilon(1). F(0) has three main subunits: a(1), b(2) and c(10-14). The alpha and beta chains form an alternating ring which encloses part of the gamma chain. F(1) is attached to F(0) by a central stalk formed by the gamma and epsilon chains, while a peripheral stalk is formed by the delta and b chains.

It is found in the cell inner membrane. F(1)F(0) ATP synthase produces ATP from ADP in the presence of a proton or sodium gradient. F-type ATPases consist of two structural domains, F(1) containing the extramembraneous catalytic core and F(0) containing the membrane proton channel, linked together by a central stalk and a peripheral stalk. During catalysis, ATP synthesis in the catalytic domain of F(1) is coupled via a rotary mechanism of the central stalk subunits to proton translocation. Its function is as follows. This protein is part of the stalk that links CF(0) to CF(1). It either transmits conformational changes from CF(0) to CF(1) or is implicated in proton conduction. This Aquifex aeolicus (strain VF5) protein is ATP synthase subunit delta.